The sequence spans 159 residues: Small ribosomal subunit protein uS13 (159 aa).

A disordered region spans residues 136-159 (QRTRSTGRSGATVGVTRKKTQAKK). A compositionally biased stretch (low complexity) spans 138 to 149 (TRSTGRSGATVG).

The protein belongs to the universal ribosomal protein uS13 family. In terms of assembly, part of the 30S ribosomal subunit. Forms a loose heterodimer with protein S19. Forms two bridges to the 50S subunit in the 70S ribosome.

Its function is as follows. Located at the top of the head of the 30S subunit, it contacts several helices of the 16S rRNA. In the 70S ribosome it contacts the 23S rRNA (bridge B1a) and protein L5 of the 50S subunit (bridge B1b), connecting the 2 subunits; these bridges are implicated in subunit movement. This Methanothrix thermoacetophila (strain DSM 6194 / JCM 14653 / NBRC 101360 / PT) (Methanosaeta thermophila) protein is Small ribosomal subunit protein uS13.